The following is a 272-amino-acid chain: MNVSQVSNHIVVIKLGGSVLSSKDTSLKDIAALKQLGLKPVLIHGGASTVSDWSAKLGLETRLVNGERVTDDPTLDVVAAVLTGLVNKEIVAALLDMGVQAAGISGVDGATITGQMRATETGYLGDVTAVNTGLINALLDKDITPVISPVSFHHTKRPSGSRRLININGDPAAGEIAAALQAERLVFMTDVPAVKGKNGEALGEISAEHAAELLSSGTASGGMIPKLRSCLKATLAGASACIIDGRIPHMLVRELTEGNCGTTIIGQHLRRS.

Substrate contacts are provided by residues 46–47, Arg-68, and Asn-166; that span reads GA.

This sequence belongs to the acetylglutamate kinase family. ArgB subfamily.

It localises to the cytoplasm. The catalysed reaction is N-acetyl-L-glutamate + ATP = N-acetyl-L-glutamyl 5-phosphate + ADP. It participates in amino-acid biosynthesis; L-arginine biosynthesis; N(2)-acetyl-L-ornithine from L-glutamate: step 2/4. Its function is as follows. Catalyzes the ATP-dependent phosphorylation of N-acetyl-L-glutamate. In Dehalococcoides mccartyi (strain ATCC BAA-2266 / KCTC 15142 / 195) (Dehalococcoides ethenogenes (strain 195)), this protein is Acetylglutamate kinase.